The primary structure comprises 123 residues: MPTINQLIRKERKKVAKRKKTPALQACPQRRGVCTRVYTTTPKKPNSALRKVARVRLTNAIEVTAYIPGEGHNLQEHSVVMIRGGRVKDLPGVRYHIVRGTLDTAGVQDRRQGRSKYGAKRPK.

The residue at position 89 (D89) is a 3-methylthioaspartic acid. The segment at 104-123 (TAGVQDRRQGRSKYGAKRPK) is disordered. Residues 113 to 123 (GRSKYGAKRPK) show a composition bias toward basic residues.

Belongs to the universal ribosomal protein uS12 family. As to quaternary structure, part of the 30S ribosomal subunit. Contacts proteins S8 and S17. May interact with IF1 in the 30S initiation complex.

Functionally, with S4 and S5 plays an important role in translational accuracy. Interacts with and stabilizes bases of the 16S rRNA that are involved in tRNA selection in the A site and with the mRNA backbone. Located at the interface of the 30S and 50S subunits, it traverses the body of the 30S subunit contacting proteins on the other side and probably holding the rRNA structure together. The combined cluster of proteins S8, S12 and S17 appears to hold together the shoulder and platform of the 30S subunit. The chain is Small ribosomal subunit protein uS12 from Oleidesulfovibrio alaskensis (strain ATCC BAA-1058 / DSM 17464 / G20) (Desulfovibrio alaskensis).